The chain runs to 255 residues: MLIILAPSKKQTYPNCPNLVSTCPEFLQEAGQLNQILRAKTEKEIALLMKTSKILTENTLRDIRAFNGSEGRGFPAIFTFKGDAYDGIKAEDWNQEQMFYAQQHLRILSGLYGILRPLDLMQKHRLEMGLKLATHSGTQMYQFWGEKITDTINRQLDKGERCLINLSSTEYSRVIQKKKLDGRMIDIIFRQIKDGRARTIPIYAKRARGAMANFMVQEKIRDSEKLKNFSSEGYRFLPGESSEDSWVFSCTLNKK.

This sequence belongs to the UPF0246 family.

In Desulfotalea psychrophila (strain LSv54 / DSM 12343), this protein is UPF0246 protein DP0358.